Reading from the N-terminus, the 2885-residue chain is E3 ubiquitin-protein ligase hyd (2885 aa).

The tract at residues 83 to 138 (SDAKCSTSGGSGTASASKAPSSSRPMARSRARLLRATGRSNSTGQGSGSRSTGVII) is disordered. Low complexity-rich tracts occupy residues 95 to 108 (TASASKAPSSSRPM) and 116 to 138 (LRATGRSNSTGQGSGSRSTGVII). The UBA domain maps to 154 to 196 (YVPEELISQAEVVLQGKSRNLIIRELQRTNLDVNLAVNNLLSR). Residues 266–276 (ANANAADSNQS) show a composition bias toward low complexity. Disordered stretches follow at residues 266-291 (ANANAADSNQSTTRSTSSGTALTGNS), 580-664 (NNLN…GRKD), and 711-731 (AATSSTSNTASTSKEEGKEDD). Composition is skewed to polar residues over residues 277-291 (TTRSTSSGTALTGNS) and 598-615 (AMPSTGSSKNGQSFSNSK). Phosphoserine occurs at positions 628 and 631. A compositionally biased stretch (basic and acidic residues) spans 650-664 (TTKEDSNAPQEGRKD). Residues 711-722 (AATSSTSNTAST) are compositionally biased toward low complexity. A Phosphoserine modification is found at serine 967. Low complexity predominate over residues 1008–1032 (ASSSNENSSFATMSSSAAGSASSTS). Residues 1008–1035 (ASSSNENSSFATMSSSAAGSASSTSRDN) are disordered. Residues 1217–1285 (DTCSFTWTGA…EKCKCKALIA (69 aa)) form a UBR-type zinc finger. The residue at position 1362 (serine 1362) is a Phosphoserine. Positions 1642–1761 (NEDGMQDDES…IRSRDTARSS (120 aa)) are disordered. Polar residues predominate over residues 1669–1681 (NQSNQEVQRSVQA). A compositionally biased stretch (acidic residues) spans 1696–1721 (LEDESGDSSAQEEDGSEDGESDDQSD). Polar residues predominate over residues 1735-1749 (TNSNARSDLAPQTMQ). Position 2037 is a phosphoserine (serine 2037). A disordered region spans residues 2124–2143 (IDSSKTGDGNVTNKAEGSTD). Residue serine 2183 is modified to Phosphoserine. Positions 2473–2492 (NLDARPYTPPNSSDNATPES) are disordered. Polar residues predominate over residues 2482–2492 (PNSSDNATPES). In terms of domain architecture, PABC spans 2484–2561 (SSDNATPESL…AIEIITFKQK (78 aa)). Phosphoserine is present on serine 2574. An HECT domain is found at 2782–2885 (FNDESSEGPD…AIKSKNFGFV (104 aa)). The Glycyl thioester intermediate role is filled by cysteine 2854.

It belongs to the UBR5 family.

The protein localises to the nucleus. Its subcellular location is the cytoplasm. It carries out the reaction S-ubiquitinyl-[E2 ubiquitin-conjugating enzyme]-L-cysteine + [acceptor protein]-L-lysine = [E2 ubiquitin-conjugating enzyme]-L-cysteine + N(6)-ubiquitinyl-[acceptor protein]-L-lysine.. It functions in the pathway protein modification; protein ubiquitination. Its function is as follows. E3 ubiquitin-protein ligase which accepts ubiquitin from an E2 ubiquitin-conjugating enzyme in the form of a thioester and then directly transfers the ubiquitin to targeted substrate. Required for regulation of cell proliferation in imaginal disks and germ cells. Acts as a negative regulator of hh, ci and dpp expression in the anterior of the eye disk. Acts as a positive regulator of the canonical Wnt signaling pathway by mediating ubiquitination and degradation of gro. Catalyzes 'Lys-63'-linked polyubiquitination of akirin, thereby activating the immune deficiency pathway (Imd). This chain is E3 ubiquitin-protein ligase hyd (hyd), found in Drosophila melanogaster (Fruit fly).